The following is a 431-amino-acid chain: Serine--tRNA ligase (431 aa).

Residue Thr-235–Glu-237 coordinates L-serine. ATP is bound by residues Arg-266–Glu-268 and Val-282. Glu-289 lines the L-serine pocket. Residue Glu-353–Ser-356 participates in ATP binding. Ser-389 is an L-serine binding site.

Belongs to the class-II aminoacyl-tRNA synthetase family. Type-1 seryl-tRNA synthetase subfamily. In terms of assembly, homodimer. The tRNA molecule binds across the dimer.

It is found in the cytoplasm. The catalysed reaction is tRNA(Ser) + L-serine + ATP = L-seryl-tRNA(Ser) + AMP + diphosphate + H(+). The enzyme catalyses tRNA(Sec) + L-serine + ATP = L-seryl-tRNA(Sec) + AMP + diphosphate + H(+). The protein operates within aminoacyl-tRNA biosynthesis; selenocysteinyl-tRNA(Sec) biosynthesis; L-seryl-tRNA(Sec) from L-serine and tRNA(Sec): step 1/1. In terms of biological role, catalyzes the attachment of serine to tRNA(Ser). Is also able to aminoacylate tRNA(Sec) with serine, to form the misacylated tRNA L-seryl-tRNA(Sec), which will be further converted into selenocysteinyl-tRNA(Sec). This is Serine--tRNA ligase from Prosthecochloris aestuarii (strain DSM 271 / SK 413).